Reading from the N-terminus, the 81-residue chain is Large ribosomal subunit protein uL23 (81 aa).

The protein belongs to the universal ribosomal protein uL23 family. Part of the 50S ribosomal subunit. Contacts protein L29.

Functionally, binds to 23S rRNA. One of the proteins that surrounds the polypeptide exit tunnel on the outside of the ribosome. The chain is Large ribosomal subunit protein uL23 from Saccharolobus solfataricus (strain ATCC 35092 / DSM 1617 / JCM 11322 / P2) (Sulfolobus solfataricus).